A 103-amino-acid polypeptide reads, in one-letter code: Large ribosomal subunit protein uL23 (103 aa).

Belongs to the universal ribosomal protein uL23 family. As to quaternary structure, part of the 50S ribosomal subunit. Contacts protein L29, and trigger factor when it is bound to the ribosome.

Functionally, one of the early assembly proteins it binds 23S rRNA. One of the proteins that surrounds the polypeptide exit tunnel on the outside of the ribosome. Forms the main docking site for trigger factor binding to the ribosome. The protein is Large ribosomal subunit protein uL23 of Pelodictyon phaeoclathratiforme (strain DSM 5477 / BU-1).